Here is a 573-residue protein sequence, read N- to C-terminus: Solute carrier family 41 member 2 (573 aa).

The Extracellular segment spans residues 1–162; it reads MTNSKGRSIT…KESSGIMALQ (162 aa). Phosphoserine is present on residues Ser-136 and Ser-137. The helical transmembrane segment at 163-183 threads the bilayer; the sequence is ILVPFLLAGFGTVSAGMVLDI. At 184 to 195 the chain is on the cytoplasmic side; that stretch reads VQHWEVFRKVTE. Residues 196 to 216 form a helical membrane-spanning segment; the sequence is VFILVPALLGLKGNLEMTLAS. Residues 217 to 245 lie on the Extracellular side of the membrane; it reads RLSTAVNIGKMDSPIEKWNLIIGNLALKQ. Residues 246 to 266 form a helical membrane-spanning segment; sequence VQATVVGFLAAVAAIILGWIP. Residues 267–282 are Cytoplasmic-facing; it reads EGKYYLDHSILLCSSS. The chain crosses the membrane as a helical span at residues 283-303; the sequence is VATAFIASLLQGIIMVGVIVG. Residues 304–313 are Extracellular-facing; sequence SKKTGINPDN. The chain crosses the membrane as a helical span at residues 314–334; that stretch reads VATPIAASFGDLITLAILAWI. Topologically, residues 335–347 are cytoplasmic; that stretch reads SQGLYSCLETYYY. The chain crosses the membrane as a helical span at residues 348-368; it reads ISPLVGVFFLALTPIWIIIAA. Topologically, residues 369-376 are extracellular; it reads KHPATRTV. Residues 377 to 397 traverse the membrane as a helical segment; sequence LHSGWEPVITAMVISSIGGLI. At 398-406 the chain is on the cytoplasmic side; that stretch reads LDTTVSDPN. A helical transmembrane segment spans residues 407–427; sequence LVGIVVYTPVINGIGGNLVAI. At 428–469 the chain is on the extracellular side; sequence QASRISTYLHLHSIPGELPDEPKGCYYPFRTFFGPGVNNKSA. The chain crosses the membrane as a helical span at residues 470-490; the sequence is QVLLLLVIPGHLIFLYTIHLM. Residues 491 to 498 lie on the Cytoplasmic side of the membrane; that stretch reads KSGHTSLT. A helical transmembrane segment spans residues 499-519; sequence IIFIVVYLFAAVLQVFTLLWI. Residues 520–543 lie on the Extracellular side of the membrane; sequence ADWMVHHFWRKGKDPDSFSIPYLT. The chain crosses the membrane as a helical span at residues 544-564; it reads ALGDLLGTALLALSFHFLWLI. Over 565-573 the chain is Cytoplasmic; it reads GDRDGDVGD.

Belongs to the SLC41A transporter family.

Its subcellular location is the cell membrane. It carries out the reaction Mg(2+)(in) = Mg(2+)(out). It catalyses the reaction Mn(2+)(in) = Mn(2+)(out). The enzyme catalyses Co(2+)(in) = Co(2+)(out). The catalysed reaction is Ni(2+)(in) = Ni(2+)(out). It carries out the reaction Fe(2+)(in) = Fe(2+)(out). Its function is as follows. Acts as a plasma-membrane magnesium transporter. Can also mediate the transport of other divalent metal cations in an order of Ba(2+) &gt; Ni(2+) &gt; Co(2+) &gt; Fe(2+) &gt; Mn(2+). This is Solute carrier family 41 member 2 (SLC41A2) from Macaca fascicularis (Crab-eating macaque).